The following is a 995-amino-acid chain: UPF0182 protein NFA_45260 (995 aa).

Helical transmembrane passes span 18-38 (VLLV…RFTD), 63-83 (IILF…ALLL), 115-135 (FGIG…QSNW), 176-196 (FVAV…FGGL), 211-231 (IQLA…YWFD), 260-280 (KLIL…GVVL), and 288-308 (MAAA…PLVV). The tract at residues 904–957 (ATPFGGDPATRPQPGTAPPVVDSTQPPADGGTPQPQTTPPPTGSAAKDAAAAEL) is disordered. Composition is skewed to low complexity over residues 927–938 (TQPPADGGTPQP) and 946–955 (GSAAKDAAAA).

The protein belongs to the UPF0182 family.

It is found in the cell membrane. The chain is UPF0182 protein NFA_45260 from Nocardia farcinica (strain IFM 10152).